The following is a 431-amino-acid chain: E3 ubiquitin-protein ligase RNF128 (431 aa).

An N-terminal signal peptide occupies residues 1–38 (MGQLPGAGVFCRGGCGFSRLLAWCFLLVLSPQTPGSRG). 3 N-linked (GlcNAc...) asparagine glycosylation sites follow: N48, N59, and N101. Positions 75–186 (SPLEPVAGVL…LKGTKILQSI (112 aa)) constitute a PA domain. A helical membrane pass occupies residues 211-231 (IFFVSVSFFIITAATVGYFIF). The RING-type; atypical zinc finger occupies 280-321 (CAVCIELYKPNDLVRILTCNHVFHKTCVDPWLLEHRTCPMCK). Residues 345–354 (VSNETSSNAS) show a composition bias toward polar residues. The segment at 345 to 431 (VSNETSSNAS…QETTVREIKS (87 aa)) is disordered.

Auto-ubiquitinated. Controls the development of T-cell clonal anergy by ubiquitination.

The protein resides in the cytoplasm. Its subcellular location is the endomembrane system. It localises to the cytoskeleton. It is found in the perinuclear region. It catalyses the reaction S-ubiquitinyl-[E2 ubiquitin-conjugating enzyme]-L-cysteine + [acceptor protein]-L-lysine = [E2 ubiquitin-conjugating enzyme]-L-cysteine + N(6)-ubiquitinyl-[acceptor protein]-L-lysine.. It participates in protein modification; protein ubiquitination. Functionally, E3 ubiquitin-protein ligase that catalyzes 'Lys-27', 'Lys-48'- or 'Lys-63'-linked polyubiquitin chains formation and plays a role in different biological processes such as modulation of immune response, cytoskeletal dynamics or protein homeostasis. Inhibits IL2 and IL4 transcription, thereby playing an important role in the induction of the anergic phenotype, a long-term stable state of T-lymphocyte unresponsiveness to antigenic stimulation associated with the blockade of interleukin production. Ubiquitinates ARPC5 with 'Lys-48' linkages and COR1A with 'Lys-63' linkages leading to their degradation, down-regulation of these cytoskeletal components results in impaired lamellipodium formation and reduced accumulation of F-actin at the immunological synapse. Functions in the patterning of the dorsal ectoderm; sensitizes ectoderm to respond to neural-inducing signals. Plays a positive role in innate immune response by promoting 'Lys-63'-linked ubiquitination of TBK1 after RNA- or DNA-virus infection. Regulates alveolar macrophage activation and neutrophil infiltration by interacting with TLR4, targeting it for degradation, and inhibiting NF-kappa-B activation, hence decreasing pro-inflammatory cytokines. Negatively regulates the IL-3/STAT5 signaling pathway by facilitating 'Lys-27'-linked polyubiquitination of IL3RA leading to its degradation via lysosomal pathway. Directly regulates the N-glycosylation process in the endoplasmic reticulum by targeting the glycosyl-transferase RPN1 for ubiquitination and degradation. Other substrates targeted for degradation by RNF128 include transmembrane proteins CD40L, CD83 or the tetraspanin CD151. The polypeptide is E3 ubiquitin-protein ligase RNF128 (RNF128) (Bos taurus (Bovine)).